The sequence spans 104 residues: MAIIPDKQDGTVLERQEKKLKPPSMYKVVLLNDDFTPMEFVVMIVQEYFNKDRETATQVMLKVHREGRGVCGVYTRDIASTKVEQVVTHARQAGHPLQCVMEEA.

Belongs to the ClpS family. As to quaternary structure, binds to the N-terminal domain of the chaperone ClpA.

In terms of biological role, involved in the modulation of the specificity of the ClpAP-mediated ATP-dependent protein degradation. This is ATP-dependent Clp protease adapter protein ClpS from Paraburkholderia xenovorans (strain LB400).